Reading from the N-terminus, the 659-residue chain is MATKSCELVLCFFVFFVISFSAISVSAQTCDNTTGTFIPNSPYDKNRRLILSTLASNVTAQEGYFIGSIGIAPDQVFATGMCAPGSERDVCSLCIRSTSESLLQSCLDQADAFFWSGEETLCLVRYANRPFSGLLVMDPLGAIFNTGELNTNQTVFDIEWNNLTSSMIAGITSSSSGGNNSSKYYSDDIALVPDFKNISALMQCTPDVSSEDCNTCLRQNVVDYDNCCRGHQGGVMSRPNCFFRWEVYPFSGAIDQINLPKSPPPSVTSPSPIANITKNDSRISGGKIAAIVVVTVVTIILVVLGFVISNRRKQKQEMDLPTESVQFDLKTIESATSNFSERNKLGKGGFGEVYKGMLMNGTEIAVKRLSKTSGQGEVEFKNEVVVVAKLQHINLVRLLGFSLQGEEKLLVYEFVSNKSLDYFLFDPTKRNQLDWTMRRNIIGGITRGILYLHQDSRLKIIHRDLKASNILLDADMNPKIADFGMARIFGVDQTVANTGRVVGTFGYMSPEYVTHGQFSMKSDVYSFGVLILEIISGKKNSSFYQMDGLVNNLVTYVWKLWENKSLHELLDPFINQDFTSEEVIRYIHIGLLCVQENPADRPTMSTIHQMLTNSSITLPVPLPPGFFFRNGPGSNPGQSNSKSFACSVDEATITDVNPR.

The signal sequence occupies residues 1 to 27 (MATKSCELVLCFFVFFVISFSAISVSA). Gnk2-homologous domains follow at residues 28-131 (QTCD…NRPF) and 137-250 (MDPL…VYPF). The Extracellular portion of the chain corresponds to 28–287 (QTCDNTTGTF…KNDSRISGGK (260 aa)). N-linked (GlcNAc...) asparagine glycans are attached at residues Asn-32, Asn-57, Asn-152, Asn-162, Asn-179, Asn-180, Asn-197, Asn-275, and Asn-279. A helical membrane pass occupies residues 288–308 (IAAIVVVTVVTIILVVLGFVI). Residues 309–659 (SNRRKQKQEM…EATITDVNPR (351 aa)) lie on the Cytoplasmic side of the membrane. Residues 339–611 (FSERNKLGKG…PTMSTIHQML (273 aa)) enclose the Protein kinase domain. ATP-binding positions include 345 to 353 (LGKGGFGEV) and Lys-367. Position 412 is a phosphotyrosine (Tyr-412). Asp-464 (proton acceptor) is an active-site residue. At Ser-468 the chain carries Phosphoserine. Position 504 is a phosphothreonine (Thr-504). A Phosphotyrosine modification is found at Tyr-512.

The protein belongs to the protein kinase superfamily. Ser/Thr protein kinase family. CRK subfamily.

Its subcellular location is the membrane. It carries out the reaction L-seryl-[protein] + ATP = O-phospho-L-seryl-[protein] + ADP + H(+). It catalyses the reaction L-threonyl-[protein] + ATP = O-phospho-L-threonyl-[protein] + ADP + H(+). The sequence is that of Cysteine-rich receptor-like protein kinase 18 (CRK18) from Arabidopsis thaliana (Mouse-ear cress).